The chain runs to 348 residues: Rhodopsin (348 aa).

N-acetylmethionine is present on methionine 1. Residues 1–36 lie on the Extracellular side of the membrane; the sequence is MNGTEGPNFYVPFSNKTGVVRSPFEYPQYYLAEPWQ. Residues asparagine 2 and asparagine 15 are each glycosylated (N-linked (GlcNAc...) asparagine). Residues 37-61 traverse the membrane as a helical segment; sequence FSMLAAYMFLLIVLGFPINFLTLYV. Topologically, residues 62–73 are cytoplasmic; the sequence is TVQHKNVRTPLN. The chain crosses the membrane as a helical span at residues 74–96; the sequence is YILLNLAVANHFMVFGGFTTTLY. Residues 97–110 are Extracellular-facing; sequence TSLHGYFVFGSTGC. Residues cysteine 110 and cysteine 187 are joined by a disulfide bond. A helical membrane pass occupies residues 111 to 133; that stretch reads NLEGFFATLGGEIALWSLVVLAI. The 'Ionic lock' involved in activated form stabilization motif lies at 134–136; sequence ERY. The Cytoplasmic segment spans residues 134 to 152; it reads ERYVVVCKPMSNFRFGENH. A helical membrane pass occupies residues 153–173; that stretch reads AIMGVAFTWVMALACAAPPLV. The Extracellular segment spans residues 174–202; the sequence is GWSRYIPEGMQCSCGIDYYTLKPEVNNES. Glutamate 201 contributes to the Zn(2+) binding site. A helical membrane pass occupies residues 203–224; that stretch reads FVIYMFVVHFTIPMTIIFFCYG. The Cytoplasmic segment spans residues 225–252; sequence QLVFTVKEAAAQQQESATTQKAEKEVTR. A helical transmembrane segment spans residues 253–274; that stretch reads MVIIMVIAFLICWVPYASVAFY. The Extracellular segment spans residues 275-286; sequence IFTHQGSDFGPI. Position 279 (glutamine 279) interacts with Zn(2+). A helical membrane pass occupies residues 287 to 308; it reads LMTLPAFFAKSSAIYNPVIYIM. Lysine 296 bears the N6-(retinylidene)lysine mark. The Cytoplasmic portion of the chain corresponds to 309-348; sequence MNKQFRNCMLTTICCGKNPFGEEEGSTTASKTETSQVAPA. Residues cysteine 322 and cysteine 323 are each lipidated (S-palmitoyl cysteine). Residues 330-348 form an interaction with SAG region; that stretch reads EEEGSTTASKTETSQVAPA. Residue serine 334 is modified to Phosphoserine. Phosphothreonine is present on residues threonine 335 and threonine 336. Serine 338 is subject to Phosphoserine. Phosphothreonine is present on residues threonine 340 and threonine 342. Serine 343 carries the post-translational modification Phosphoserine.

It belongs to the G-protein coupled receptor 1 family. Opsin subfamily. Homodimer. May form a complex composed of RHO, GRK1 and RCVRN in a Ca(2+)-dependent manner; RCVRN prevents the interaction between GRK1 and RHO. Interacts with GRK1. Interacts (phosphorylated form) with SAG. Interacts with GNAT1. Interacts with GNAT3. SAG and G-proteins compete for a common binding site. Interacts with PRCD; the interaction promotes PRCD stability. Forms a complex with ASAP1 and ARF4. Forms a complex with ASAP1, RAB11A, Rabin8/RAB3IP, ARF4 and RAB11FIP3; the complex regulates Golgi-to-cilia rhodopsin/RHO transport in photoreceptors. In terms of processing, phosphorylated on some or all of the serine and threonine residues present in the C-terminal region. Contains one covalently linked retinal chromophore. Upon light absorption, the covalently bound 11-cis-retinal is converted to all-trans-retinal. After hydrolysis of the Schiff base and release of the covalently bound all-trans-retinal, active rhodopsin is regenerated by binding of a fresh molecule of 11-cis-retinal.

Its subcellular location is the membrane. It is found in the cell projection. The protein resides in the cilium. The protein localises to the photoreceptor outer segment. Functionally, photoreceptor required for image-forming vision at low light intensity. Required for photoreceptor cell viability after birth. Light-induced isomerization of 11-cis to all-trans retinal triggers a conformational change that activates signaling via G-proteins. Subsequent receptor phosphorylation mediates displacement of the bound G-protein alpha subunit by the arrestin SAG and terminates signaling. The polypeptide is Rhodopsin (RHO) (Loxodonta africana (African elephant)).